Reading from the N-terminus, the 126-residue chain is Large ribosomal subunit protein bL20c (126 aa).

This sequence belongs to the bacterial ribosomal protein bL20 family.

It localises to the plastid. The protein localises to the chloroplast. Binds directly to 23S ribosomal RNA and is necessary for the in vitro assembly process of the 50S ribosomal subunit. It is not involved in the protein synthesizing functions of that subunit. This is Large ribosomal subunit protein bL20c from Lactuca sativa (Garden lettuce).